The sequence spans 547 residues: MAELTIRPEEIRDALQRFVQSYEPDAAAREEIGTVTYSGDGIARVSGLPSAMANELLEFEDGTQGIAQNLEIGEIGVVVLGDFTNIAEGQTVRRTGQVLSVPVGDAYLGRVVDPLGRPIDGKGEIETTERRELELQAATVMQRKPVHEPLQTGIKAIDALTPIGRGQRQLIIGDRQTGKTAVCIDTIINQKANWESGDPNKQVRCIYVAVGQKGSTIAGVRAALEEAGAMEYTTIVASPASDPAGFKYIAPYTGSAIGQHWMYQGKHVLIVFDDLTKQAEAYRAVSLLLRRPPGREAYPGDVFYLHSRLLERCAKLSDEMGAGSLTGLPIIETKANDVSAYIPTNVISITDGQVFLESDLFNQGQRPAINVGISVSRVGGAAQTKAMKKVVGSLRVGLAQYRDLEAFAAFGSDLDAASKAQLERGARLMELLKQGQYSPFPMEEEVVSIWAGTTGHLDDVPVEDIRRFESEFLAYLRREHSKILDVIRETEDFGDDTAEALTDAIKEFKKTFQTSDGTILGTEAPAEALDESEVGQETIKVAKTSGK.

Residue 173-180 (GDRQTGKT) participates in ATP binding.

Belongs to the ATPase alpha/beta chains family. F-type ATPases have 2 components, CF(1) - the catalytic core - and CF(0) - the membrane proton channel. CF(1) has five subunits: alpha(3), beta(3), gamma(1), delta(1), epsilon(1). CF(0) has three main subunits: a(1), b(2) and c(9-12). The alpha and beta chains form an alternating ring which encloses part of the gamma chain. CF(1) is attached to CF(0) by a central stalk formed by the gamma and epsilon chains, while a peripheral stalk is formed by the delta and b chains.

It localises to the cell membrane. It carries out the reaction ATP + H2O + 4 H(+)(in) = ADP + phosphate + 5 H(+)(out). Functionally, produces ATP from ADP in the presence of a proton gradient across the membrane. The alpha chain is a regulatory subunit. This chain is ATP synthase subunit alpha, found in Thermobifida fusca (strain YX).